A 480-amino-acid chain; its full sequence is Membrane-bound lytic murein transglycosylase F (480 aa).

A signal peptide spans 1-15 (MKKLLFVLLTITLLA). Residues 16–259 (SCQKVSVEQT…HLNEKYFAHV (244 aa)) are non-LT domain. An LT domain region spans residues 260-480 (KRFDYVDTRA…QENLSGAQPQ (221 aa)). The active site involves Glu304.

The protein in the N-terminal section; belongs to the bacterial solute-binding protein 3 family. In the C-terminal section; belongs to the transglycosylase Slt family.

The protein localises to the cell outer membrane. The enzyme catalyses Exolytic cleavage of the (1-&gt;4)-beta-glycosidic linkage between N-acetylmuramic acid (MurNAc) and N-acetylglucosamine (GlcNAc) residues in peptidoglycan, from either the reducing or the non-reducing ends of the peptidoglycan chains, with concomitant formation of a 1,6-anhydrobond in the MurNAc residue.. Functionally, murein-degrading enzyme that degrades murein glycan strands and insoluble, high-molecular weight murein sacculi, with the concomitant formation of a 1,6-anhydromuramoyl product. Lytic transglycosylases (LTs) play an integral role in the metabolism of the peptidoglycan (PG) sacculus. Their lytic action creates space within the PG sacculus to allow for its expansion as well as for the insertion of various structures such as secretion systems and flagella. The chain is Membrane-bound lytic murein transglycosylase F from Shewanella sediminis (strain HAW-EB3).